Here is a 361-residue protein sequence, read N- to C-terminus: Phosphoserine aminotransferase (361 aa).

Residue R42 coordinates L-glutamate. Residues A76 to R77, W102, T153, D173, and Q196 contribute to the pyridoxal 5'-phosphate site. Position 197 is an N6-(pyridoxal phosphate)lysine (K197). Pyridoxal 5'-phosphate is bound at residue N238–T239.

Belongs to the class-V pyridoxal-phosphate-dependent aminotransferase family. SerC subfamily. In terms of assembly, homodimer. The cofactor is pyridoxal 5'-phosphate.

The protein resides in the cytoplasm. The enzyme catalyses O-phospho-L-serine + 2-oxoglutarate = 3-phosphooxypyruvate + L-glutamate. It catalyses the reaction 4-(phosphooxy)-L-threonine + 2-oxoglutarate = (R)-3-hydroxy-2-oxo-4-phosphooxybutanoate + L-glutamate. The protein operates within amino-acid biosynthesis; L-serine biosynthesis; L-serine from 3-phospho-D-glycerate: step 2/3. It participates in cofactor biosynthesis; pyridoxine 5'-phosphate biosynthesis; pyridoxine 5'-phosphate from D-erythrose 4-phosphate: step 3/5. Functionally, catalyzes the reversible conversion of 3-phosphohydroxypyruvate to phosphoserine and of 3-hydroxy-2-oxo-4-phosphonooxybutanoate to phosphohydroxythreonine. The chain is Phosphoserine aminotransferase from Buchnera aphidicola subsp. Acyrthosiphon pisum (strain 5A).